We begin with the raw amino-acid sequence, 492 residues long: Trehalose-6-phosphate synthase (492 aa).

Arg-25 lines the D-glucose 6-phosphate pocket. A UDP-alpha-D-glucose-binding site is contributed by 45 to 46; sequence GG. Residues Tyr-101 and Asp-155 each coordinate D-glucose 6-phosphate. Arg-297 and Lys-302 together coordinate UDP-alpha-D-glucose. D-glucose 6-phosphate is bound at residue Arg-335. Position 400 to 404 (400 to 404) interacts with UDP-alpha-D-glucose; sequence LVAKE.

This sequence belongs to the glycosyltransferase 20 family. Homotetramer.

The catalysed reaction is ADP-alpha-D-glucose + D-glucose 6-phosphate = alpha,alpha-trehalose 6-phosphate + ADP + H(+). It carries out the reaction CDP-alpha-D-glucose + D-glucose 6-phosphate = alpha,alpha-trehalose 6-phosphate + CDP + H(+). The enzyme catalyses GDP-alpha-D-glucose + D-glucose 6-phosphate = alpha,alpha-trehalose 6-phosphate + GDP + H(+). It catalyses the reaction TDP-alpha-D-glucose + D-glucose 6-phosphate = 5-methyl-UDP + alpha,alpha-trehalose 6-phosphate + H(+). The catalysed reaction is D-glucose 6-phosphate + UDP-alpha-D-glucose = alpha,alpha-trehalose 6-phosphate + UDP + H(+). The protein operates within glycan biosynthesis; trehalose biosynthesis. In terms of biological role, probably involved in the osmoprotection via the biosynthesis of trehalose and in the production of glycogen and alpha-glucan via the TreS-Pep2 branch involved in the biosynthesis of maltose-1-phosphate (M1P). Catalyzes the transfer of glucose from UDP-glucose (UDP-Glc) to D-glucose 6-phosphate (Glc-6-P) to form trehalose-6-phosphate. Probably also able to use ADP-Glc, CDP-Glc, GDP-Glc and TDP-Glc as glucosyl donors. This chain is Trehalose-6-phosphate synthase, found in Mycolicibacterium paratuberculosis (strain ATCC BAA-968 / K-10) (Mycobacterium paratuberculosis).